The primary structure comprises 63 residues: Large ribosomal subunit protein uL29 (63 aa).

Belongs to the universal ribosomal protein uL29 family.

This chain is Large ribosomal subunit protein uL29, found in Bordetella avium (strain 197N).